The primary structure comprises 847 residues: KN motif and ankyrin repeat domain-containing protein 2 (847 aa).

Residues 1 to 32 are disordered; sequence MAQVLHVPAPFPGTPGQASSAAFPNKEPDPPY. Residues 1-72 form an interaction with AIFM1 region; sequence MAQVLHVPAP…PVQRRPRLGS (72 aa). Phosphoserine is present on residues S19, S83, S86, S89, and S92. At R105 the chain carries Omega-N-methylarginine. The tract at residues 161-182 is disordered; that stretch reads LAGVGLLPPTPRSSGLSTPVAP. The residue at position 170 (T170) is a Phosphothreonine. Coiled coils occupy residues 187 to 207 and 284 to 311; these read LAHV…LEEQ and EAAL…AQTQ. Position 331 is a phosphothreonine (T331). S358 carries the post-translational modification Phosphoserine. Disordered stretches follow at residues 414 to 473 and 502 to 581; these read GAAR…GGAS and NGGY…PEEE. Residues 420–433 show a composition bias toward pro residues; that stretch reads DPPPSPAEPSPSSP. 2 stretches are compositionally biased toward low complexity: residues 434–446 and 506–516; these read YPAA…APAA and ESSSEDSSTAE. Phosphoserine is present on S536. The stretch at 610–647 is one ANK 0; degenerate repeat; it reads RELKVAYTTVLQEWLRLACRSDAHPELVRRHLVTFRAM. 5 ANK repeats span residues 662 to 692, 696 to 729, 734 to 763, 767 to 797, and 801 to 831; these read NGNT…QVDK, AGYS…NVNA, AGQT…DVNM, DGST…DISL, and DGST…KCSF. The interaction with NCOA1 stretch occupies residues 665-831; sequence TALHYSVSHA…YSRMNIKCSF (167 aa).

In terms of assembly, interacts (non-phosphorylated form) with NCOA1; NCOA2 AND NCOA3. Interacts with AIFM1. Interacts with ARHGDIA; the interaction is direct and may regulate the interaction of ARHGDIA with RHOA, RAC1 and CDC42. Interacts (via ANK repeats 1-5) with KIF21A. In terms of processing, phosphorylated by casein kinase II upon estrogen stimulation. Phosphorylation induces the release by KANK2 of NCOA1 and its translocation to the nucleus where NCOA1 can activate gene transcription. As to expression, expressed by podocytes in kidney glomeruli (at protein level).

Its subcellular location is the cytoplasm. The protein localises to the mitochondrion. Functionally, involved in transcription regulation by sequestering in the cytoplasm nuclear receptor coactivators such as NCOA1, NCOA2 and NCOA3. Involved in regulation of caspase-independent apoptosis by sequestering the proapoptotic factor AIFM1 in mitochondria. Pro-apoptotic stimuli can induce its proteasomal degradation allowing the translocation of AIFM1 to the nucleus to induce apoptosis. Involved in the negative control of vitamin D receptor signaling pathway. Involved in actin stress fibers formation through its interaction with ARHGDIA and the regulation of the Rho signaling pathway. May thereby play a role in cell adhesion and migration, regulating for instance podocytes migration during development of the kidney. Through the Rho signaling pathway may also regulate cell proliferation. This is KN motif and ankyrin repeat domain-containing protein 2 from Rattus norvegicus (Rat).